The sequence spans 186 residues: UPF0301 protein CV_3909 (186 aa).

The protein belongs to the UPF0301 (AlgH) family.

The chain is UPF0301 protein CV_3909 from Chromobacterium violaceum (strain ATCC 12472 / DSM 30191 / JCM 1249 / CCUG 213 / NBRC 12614 / NCIMB 9131 / NCTC 9757 / MK).